Reading from the N-terminus, the 536-residue chain is ATP synthase subunit alpha, mitochondrial (536 aa).

The transit peptide at 1-24 (MFKNALRRAGVAAPRISRVAQRGY) directs the protein to the mitochondrion. Residue 195–202 (GDRQTGKT) coordinates ATP.

As to quaternary structure, F-type ATP synthases have 2 components, the catalytic core F(1) and the membrane-embedded component F(0), linked together by a central stalk and a peripheral stalk. The central stalk, also called rotor shaft, is often seen as part of F(1). The peripheral stalk is seen as part of F(0). F(0) contains the membrane channel next to the rotor. F-type ATP synthases form dimers but each monomer functions independently in ATP generation. The dimer consists of 17 different polypeptides: ATP1 (subunit alpha, 3 molecules per monomer, part of F(1)), ATP2 (subunit beta, 3 copies per monomer, part of F(1)), ATP3 (subunit gamma, part of the central stalk), ATP4 (subunit b, part of the peripheral stalk), ATP5/OSCP (subunit 5/OSCP, part of the peripheral stalk), ATP6 (subunit a, part of the peripheral stalk), ATP7 (subunit d, part of the peripheral stalk), ATP8 (subunit 8, part of the peripheral stalk), OLI1 (subunit c, part of the rotor, 10 molecules per monomer), ATP14 (subunit h, part of the peripheral stalk), ATP15 (subunit epsilon, part of the central stalk), ATP16 (subunit delta, part of the central stalk), ATP17 (subunit f, part of the peripheral stalk), ATP18 (subunit i/j, part of the peripheral stalk), ATP19 (subunit k, dimer-specific, at interface between monomers), ATP20 (subunit g, at interface between monomers), TIM11 (subunit e, at interface between monomers).

Its subcellular location is the mitochondrion inner membrane. Mitochondrial membrane ATP synthase (F(1)F(0) ATP synthase or Complex V) produces ATP from ADP in the presence of a proton gradient across the membrane which is generated by electron transport complexes of the respiratory chain. F-type ATP synthases consist of two structural domains, F(1) - containing the extramembraneous catalytic core, and F(0) - containing the membrane proton channel, linked together by a central stalk and a peripheral stalk. During catalysis, ATP synthesis in the catalytic domain of F(1) is coupled via a rotary mechanism of the central stalk subunits to proton translocation. Subunits alpha/ATP1 and beta/ATP2 form the catalytic core in F(1). Rotation of the central stalk against the surrounding alpha/ATP1(3)beta/ATP2(3) subunits leads to hydrolysis of ATP in three separate catalytic sites on the beta/ATP2 subunits. Subunit alpha/ATP1 does not bear the catalytic high-affinity ATP-binding sites. This Yarrowia lipolytica (strain CLIB 122 / E 150) (Yeast) protein is ATP synthase subunit alpha, mitochondrial.